The chain runs to 243 residues: Sec-independent protein translocase protein TATB, chloroplastic (243 aa).

The N-terminal 67 residues, 1 to 67 (MTPTANLLLP…SRTRRRNVIC (67 aa)), are a transit peptide targeting the chloroplast. Residues 68 to 69 (AS) lie on the Lumenal side of the membrane. Residues 70-90 (LFGVGAPEALVIGVVALLVFG) form a helical membrane-spanning segment. Residues 91-243 (PKGLAEVARN…NKSQKAEGER (153 aa)) lie on the Stromal side of the membrane. Disordered regions lie at residues 129–165 (EIGI…PAPY) and 178–243 (IAAS…EGER). 2 stretches are compositionally biased toward polar residues: residues 135–152 (VSQS…NQQP) and 187–204 (NPQQ…PTTP).

The protein belongs to the TatB family. As to quaternary structure, in thylakoid membranes, TATC and TATB form a large receptor complex, containing about eight TATC-TATB pairs, which binds the precursor protein. Twin arginine signal peptide promotes pH-triggered docking of TATA oligomers to TATC-TATB receptor complex, inducing a conformational switch of TATA that results in activation of the translocase. TATA dissociates from TATC-TATB upon completion of translocation.

The protein resides in the plastid. Its subcellular location is the chloroplast thylakoid membrane. Its function is as follows. Part of the twin-arginine translocation (Tat) system that transports large folded proteins containing a characteristic twin-arginine motif in their signal peptide across the thylakoid membrane. Involved in delta pH-dependent protein transport required for chloroplast development, especially thylakoid membrane formation. TATC and TATB mediate precursor recognition, whereas TATA facilitates translocation. In Zea mays (Maize), this protein is Sec-independent protein translocase protein TATB, chloroplastic.